A 152-amino-acid polypeptide reads, in one-letter code: S-Adenosylmethionine lyase (152 aa).

In terms of assembly, homotetramer. Interacts with host METK; this interaction induces the polymerization of METK into filaments that are enzymatically inactive.

It carries out the reaction S-adenosyl-L-methionine = L-homoserine lactone + S-methyl-5'-thioadenosine. In terms of biological role, degrades the intracellular SAM pools of the host cell and inhibits the host S-adenosylmethionine synthase METK/MAT, thereby preventing methylation of the viral genome. Induces the polymerization of METK into filaments that are enzymatically inactive. Keeping the viral genome in an unmethylated state allows the phage to shift from a lytic infection under normal growth conditions to a transient lysogenic infection under glucose starvation, by blocking its own expression. Does not protect the virus immune against host restriction-modification systems. This Escherichia coli (Bacteriophage T3) protein is S-Adenosylmethionine lyase.